A 415-amino-acid chain; its full sequence is Probable cysteine desulfurase (415 aa).

Position 233 is an N6-(pyridoxal phosphate)lysine (Lys233). Residue Cys372 is the Cysteine persulfide intermediate of the active site.

Belongs to the class-V pyridoxal-phosphate-dependent aminotransferase family. Csd subfamily. Requires pyridoxal 5'-phosphate as cofactor.

The catalysed reaction is (sulfur carrier)-H + L-cysteine = (sulfur carrier)-SH + L-alanine. In Halobacterium salinarum (strain ATCC 700922 / JCM 11081 / NRC-1) (Halobacterium halobium), this protein is Probable cysteine desulfurase (csd).